Consider the following 277-residue polypeptide: Large ribosomal subunit protein uL2 (277 aa).

Disordered regions lie at residues 34–55 (LQPL…RHHG) and 213–277 (WKGI…RKKK).

It belongs to the universal ribosomal protein uL2 family. Part of the 50S ribosomal subunit. Forms a bridge to the 30S subunit in the 70S ribosome.

Its function is as follows. One of the primary rRNA binding proteins. Required for association of the 30S and 50S subunits to form the 70S ribosome, for tRNA binding and peptide bond formation. It has been suggested to have peptidyltransferase activity; this is somewhat controversial. Makes several contacts with the 16S rRNA in the 70S ribosome. The sequence is that of Large ribosomal subunit protein uL2 from Staphylococcus haemolyticus (strain JCSC1435).